The sequence spans 155 residues: Putative pre-16S rRNA nuclease (155 aa).

The protein belongs to the YqgF nuclease family.

The protein resides in the cytoplasm. Its function is as follows. Could be a nuclease involved in processing of the 5'-end of pre-16S rRNA. The protein is Putative pre-16S rRNA nuclease of Xanthomonas oryzae pv. oryzae (strain MAFF 311018).